The following is a 237-amino-acid chain: Derlin-2 (237 aa).

At 1-20 (MNGVVAALEEMPPVTRFYTG) the chain is on the cytoplasmic side. A helical membrane pass occupies residues 21-41 (ACVLLTTAVHLEFVTPFHLYF). Over 42-54 (NWELIIRKYQFWR) the chain is Lumenal. Residues 55–75 (LITSFCFFGSFGFSFLFNMIF) traverse the membrane as a helical segment. Residues 76 to 97 (TYRYCMMLEEGSFRGRRADFVY) lie on the Cytoplasmic side of the membrane. A helical transmembrane segment spans residues 98-118 (MFLFGAVLMILSGIFVQILFL). Topologically, residues 119–166 (GQAFTIMLVYIWSRRNPMIQMNFFGVLTFTAPYLPWVLLLFSLLLGNN) are lumenal. The helical transmembrane segment at 167–187 (AVVDFMGIACGHIYFFLEDVF) threads the bilayer. Residues 188-237 (PFQEHGKRFLKTPQWLVYLFDERRPEPLPEDERPGGFEWGDEQPEQEQHD) are Cytoplasmic-facing. Residues 212-222 (PEPLPEDERPG) are compositionally biased toward basic and acidic residues. The tract at residues 212–237 (PEPLPEDERPGGFEWGDEQPEQEQHD) is disordered. Residues 226 to 237 (WGDEQPEQEQHD) are compositionally biased toward acidic residues.

The protein belongs to the derlin family.

Its subcellular location is the endoplasmic reticulum membrane. In terms of biological role, may be required for the degradation process of some specific misfolded endoplasmic reticulum (ER) luminal proteins. Participates in the transfer of misfolded proteins from the ER to the cytosol, where they are destroyed by the proteasome in a ubiquitin-dependent manner. Its precise function remains unclear, but its ability to complement der1 mutations in C.cerevisiae, suggests a similar function in the degradation of ER misfolded proteins. This chain is Derlin-2, found in Caenorhabditis elegans.